The chain runs to 265 residues: Neuronal membrane glycoprotein M6-b (265 aa).

A helical transmembrane segment spans residues 31–51; sequence GGVPYASLVATILCFSGVALF. A glycan (N-linked (GlcNAc...) asparagine) is linked at asparagine 73. 2 consecutive transmembrane segments (helical) span residues 90–110 and 136–156; these read VIYG…AEGF and FVFL…FSAV. N-linked (GlcNAc...) asparagine glycosylation is present at asparagine 177. A helical transmembrane segment spans residues 224–244; that stretch reads LFIVACAGAGATVIALLIYMM. Phosphoserine is present on serine 257.

It belongs to the myelin proteolipid protein family. In terms of assembly, interacts with SERT. As to expression, neurons and glia; cerebellar Bergmann glia, in glia within white matter tracts of the cerebellum and cerebrum, and in embryonic dorsal root ganglia.

The protein localises to the cell membrane. May be involved in neural development. Involved in regulation of osteoblast function and bone formation. Involved in matrix vesicle release by osteoblasts; this function seems to involve maintenance of the actin cytoskeleton. May be involved in cellular trafficking of SERT and thereby in regulation of serotonin uptake. This is Neuronal membrane glycoprotein M6-b (GPM6B) from Homo sapiens (Human).